Consider the following 406-residue polypeptide: D-alanyl-D-alanine carboxypeptidase (406 aa).

The signal sequence occupies residues 1-31 (MVSGTVGRGTALGAVLLALLAVPAQAGTAAA). Serine 93 functions as the Acyl-ester intermediate in the catalytic mechanism. Substrate-binding positions include 151 to 154 (FAQT), 190 to 192 (YSN), arginine 316, 330 to 332 (TGT), and 357 to 358 (SN). A propeptide spanning residues 381–406 (AKLRSATSSATTVERHEDIAPGIARD) is cleaved from the precursor. Residues 387–406 (TSSATTVERHEDIAPGIARD) are disordered. The segment covering 393-406 (VERHEDIAPGIARD) has biased composition (basic and acidic residues).

This sequence belongs to the peptidase S12 family.

The protein resides in the secreted. It carries out the reaction Preferential cleavage: (Ac)2-L-Lys-D-Ala-|-D-Ala. Also transpeptidation of peptidyl-alanyl moieties that are N-acyl substituents of D-alanine.. It functions in the pathway cell wall biogenesis; peptidoglycan biosynthesis. Catalyzes distinct carboxypeptidation and transpeptidation reactions during the last stages of wall peptidoglycan synthesis. Mistaking a beta-lactam antibiotic molecule for a normal substrate (i.e. a D-alanyl-D-alanine-terminated peptide), it becomes immobilized in the form of a long-lived, serine-ester-linked acyl enzyme and thus behave as penicillin-binding protein (PBP). This chain is D-alanyl-D-alanine carboxypeptidase, found in Streptomyces sp. (strain R61).